A 437-amino-acid chain; its full sequence is Chromosomal replication initiator protein DnaA (437 aa).

The tract at residues 1–82 (MIFPIWKKCL…KIIINIEKKK (82 aa)) is domain I, interacts with DnaA modulators. The tract at residues 82–101 (KLEKKKCIYKKKNIQIYLHS) is domain II. The domain III, AAA+ region stretch occupies residues 102–318 (EINKKYQFHN…GILKKIQILS (217 aa)). The ATP site is built by G146, G148, K149, and T150. Positions 319 to 437 (ILNKEKITIN…FIYLFNQLNA (119 aa)) are domain IV, binds dsDNA.

The protein belongs to the DnaA family. Oligomerizes as a right-handed, spiral filament on DNA at oriC.

It localises to the cytoplasm. In terms of biological role, plays an essential role in the initiation and regulation of chromosomal replication. ATP-DnaA binds to the origin of replication (oriC) to initiate formation of the DNA replication initiation complex once per cell cycle. Binds the DnaA box (a 9 base pair repeat at the origin) and separates the double-stranded (ds)DNA. Forms a right-handed helical filament on oriC DNA; dsDNA binds to the exterior of the filament while single-stranded (ss)DNA is stabiized in the filament's interior. The ATP-DnaA-oriC complex binds and stabilizes one strand of the AT-rich DNA unwinding element (DUE), permitting loading of DNA polymerase. After initiation quickly degrades to an ADP-DnaA complex that is not apt for DNA replication. Binds acidic phospholipids. This Buchnera aphidicola subsp. Cinara cedri (strain Cc) protein is Chromosomal replication initiator protein DnaA.